We begin with the raw amino-acid sequence, 47 residues long: Alpha-conotoxin VxXXC (47 aa).

Hydroxyproline; partial is present on residues P10, P21, and P29. Cystine bridges form between C18–C27, C23–C35, C28–C45, and C33–C47.

As to quaternary structure, homodimer. Pseudo-homodimer (identical sequence, different post-translational modifications). HydroxyPro-10 is only found in a minor form. As to expression, expressed by the venom duct.

It localises to the secreted. Alpha-conotoxins act on postsynaptic membranes, they bind to the nicotinic acetylcholine receptors (nAChR) and thus inhibit them. Through its two C-terminal domains, this homodimeric protein would bind to two nAChR allosteric sites, located outside the nAChR C-loop of the principal binding face and at the adjacent binding interface in a clockwise direction. This toxin specifically blocks mammalian neuronal nAChR of the alpha-7/CHRNA7, alpha-3-beta-2/CHRNA3-CHRNB2 and alpha-4-beta-2/CHRNA4-CHRNB2 subtypes. VxXXA and VxXXB inhibit alpha-7/CHRNA7 and alpha-3-beta-2/CHRNA3-CHRNB2 nAChR more efficiently than VxXXC. VxXXB is the most effective at inhibiting alpha-4-beta-2/CHRNA4-CHRNB2 nAChR, followed by VxXXC and VxXXA. The protein is Alpha-conotoxin VxXXC of Conus vexillum (Flag cone).